Consider the following 348-residue polypeptide: Terpene cyclase ctvD (348 aa).

The helical transmembrane segment at 2–22 (ALSAYFLLCLSVLGLDAIYGF) threads the bilayer. Asn-51 carries N-linked (GlcNAc...) asparagine glycosylation. Helical transmembrane passes span 77–97 (PGLSLQAFHFLGAIVAVWVAI), 116–136 (LFAMLSQVVAIAVIVPLWCAI), 161–181 (LIPISMVLGFGIPTIGMLLPE), 191–211 (QIAIAVWQIWPIYVALWHWGL), 235–255 (FAFVCAIIPHAVSWGLSLTLI), 283–303 (GLWFLQWDHLIGMGSFLLWAM), and 323–343 (LKVGVLCLISGPCGAAVWLLW).

Belongs to the membrane-bound ascI terpene cyclase family.

It localises to the membrane. Its pathway is mycotoxin biosynthesis. Its function is as follows. Hydrolase; part of the gene cluster that mediates the biosynthesis of citreoviridin, an inhibitor of the of F1-ATPase beta-subunit. The HR-PKS ctvA accepts acetyl-CoA as the starter unit and catalyzes eight iterations of malonyl-CoA extension and four iterations of SAM-dependent methylation at C4, C12, C14, and C16. The KR and DH domains selectively act on the first six iterations to generate the hexaene chain. In the last three iterations, the KR and DH domains terminate their functions to yield a beta,delta-diketo ester moiety, which then undergoes intramolecular cyclization to yield an alpha-pyrone intermediate. Subsequently, ctvB methylates the alpha-pyrone hydroxyl group to generate citreomontanin. In order to form the tetrahydrofuran ring with the correct stereochemistry, the terminal alkenes of citreomontanin need to undergo isomerization to yield a (17Z)-hexaene, a step that could be catalyzed by ctvC. The (17Z)-hexaene then undergoes bisepoxidation by ctvC to form a (17R,16R,15S,14R)-bisepoxide moiety. Lastly, ctvD acts as a regioselective hydrolase to form the tetrahydrofuran ring with the substituents in the correct absolute configuration, completing the biosynthesis of citreoviridin. The polypeptide is Terpene cyclase ctvD (Aspergillus terreus (strain NIH 2624 / FGSC A1156)).